Reading from the N-terminus, the 377-residue chain is MMVIVLDNSNIRVVVGMSGGVDSSVTALLLKQQGYDVVGVFMKNWDDTDENGVCTATTDYEDVAKVASEIGIPYYSINFEKEYWDRVFQYFLDEYKAGRTPNPDVMCNKEIKFKAFLDYADQLNADYIAMGHYAQVKTDENGIVHMLRGADGNKDQTYFLSQLSQDQLKKSLFPIGHLQKPEVRKIAEAAGLATAKKKDSTGICFIGERNFKQFLSTYLPAQPGKMMTVDGVEMGTHDGLMYYTIGQRQGLGIGGNSDNSEPWFVVGKDLDKNILYVGQGFDNPALMATSLSASNLNWTTGQAPAEGTHMTAKFRYRQRDTGVTLHYHDDGTATVDFDVPVRAITPGQAVVFYDGDECLGGGTIDAAYAHTNELQYV.

ATP contacts are provided by residues 16–23 and Met-42; that span reads GMSGGVDS. Residues 102 to 104 are interaction with target base in tRNA; it reads NPD. Cys-107 acts as the Nucleophile in catalysis. Cys-107 and Cys-204 are disulfide-bonded. Residue Gly-131 coordinates ATP. An interaction with tRNA region spans residues 154-156; sequence KDQ. Residue Cys-204 is the Cysteine persulfide intermediate of the active site. Residues 315 to 316 are interaction with tRNA; that stretch reads RY.

Belongs to the MnmA/TRMU family.

The protein resides in the cytoplasm. It catalyses the reaction S-sulfanyl-L-cysteinyl-[protein] + uridine(34) in tRNA + AH2 + ATP = 2-thiouridine(34) in tRNA + L-cysteinyl-[protein] + A + AMP + diphosphate + H(+). Functionally, catalyzes the 2-thiolation of uridine at the wobble position (U34) of tRNA, leading to the formation of s(2)U34. In Lacticaseibacillus paracasei (strain ATCC 334 / BCRC 17002 / CCUG 31169 / CIP 107868 / KCTC 3260 / NRRL B-441) (Lactobacillus paracasei), this protein is tRNA-specific 2-thiouridylase MnmA.